A 377-amino-acid chain; its full sequence is 3-dehydroquinate synthase (377 aa).

NAD(+)-binding positions include 113 to 117, 137 to 138, lysine 150, and lysine 159; these read GVIGD and TT. Zn(2+) contacts are provided by glutamate 192, histidine 254, and histidine 273.

It belongs to the sugar phosphate cyclases superfamily. Dehydroquinate synthase family. Co(2+) is required as a cofactor. It depends on Zn(2+) as a cofactor. Requires NAD(+) as cofactor.

The protein resides in the cytoplasm. The catalysed reaction is 7-phospho-2-dehydro-3-deoxy-D-arabino-heptonate = 3-dehydroquinate + phosphate. It participates in metabolic intermediate biosynthesis; chorismate biosynthesis; chorismate from D-erythrose 4-phosphate and phosphoenolpyruvate: step 2/7. Catalyzes the conversion of 3-deoxy-D-arabino-heptulosonate 7-phosphate (DAHP) to dehydroquinate (DHQ). In Bartonella bacilliformis (strain ATCC 35685 / KC583 / Herrer 020/F12,63), this protein is 3-dehydroquinate synthase.